Here is a 356-residue protein sequence, read N- to C-terminus: 3-deoxy-alpha-D-manno-octulosonate 8-oxidase (356 aa).

It belongs to the iron-containing alcohol dehydrogenase family. Requires a divalent metal cation as cofactor.

It catalyses the reaction 3-deoxy-alpha-D-manno-oct-2-ulosonate + O2 = 3,8-dideoxy-8-oxo-alpha-D-manno-octulosonate + H2O2. It participates in bacterial outer membrane biogenesis; lipopolysaccharide biosynthesis. Its activity is regulated as follows. Inhibited by EDTA. Functionally, catalyzes the first step of the biosynthesis of Kdo8N (8-amino-3,8-dideoxy-D-manno-octulosonate) from Kdo (3-deoxy-D-manno-octulosonate). This is 3-deoxy-alpha-D-manno-octulosonate 8-oxidase from Shewanella oneidensis (strain ATCC 700550 / JCM 31522 / CIP 106686 / LMG 19005 / NCIMB 14063 / MR-1).